The chain runs to 239 residues: Pyridoxine 5'-phosphate synthase (239 aa).

3-amino-2-oxopropyl phosphate is bound at residue Asn7. Residue 9-10 (DH) coordinates 1-deoxy-D-xylulose 5-phosphate. Residue Arg18 coordinates 3-amino-2-oxopropyl phosphate. His43 acts as the Proton acceptor in catalysis. Residues Arg45 and His50 each coordinate 1-deoxy-D-xylulose 5-phosphate. Glu70 serves as the catalytic Proton acceptor. 1-deoxy-D-xylulose 5-phosphate is bound at residue Thr100. The Proton donor role is filled by His191. Residues Gly192 and 213–214 (GH) contribute to the 3-amino-2-oxopropyl phosphate site.

Belongs to the PNP synthase family. Homooctamer; tetramer of dimers.

Its subcellular location is the cytoplasm. It catalyses the reaction 3-amino-2-oxopropyl phosphate + 1-deoxy-D-xylulose 5-phosphate = pyridoxine 5'-phosphate + phosphate + 2 H2O + H(+). It participates in cofactor biosynthesis; pyridoxine 5'-phosphate biosynthesis; pyridoxine 5'-phosphate from D-erythrose 4-phosphate: step 5/5. Catalyzes the complicated ring closure reaction between the two acyclic compounds 1-deoxy-D-xylulose-5-phosphate (DXP) and 3-amino-2-oxopropyl phosphate (1-amino-acetone-3-phosphate or AAP) to form pyridoxine 5'-phosphate (PNP) and inorganic phosphate. The chain is Pyridoxine 5'-phosphate synthase from Syntrophotalea carbinolica (strain DSM 2380 / NBRC 103641 / GraBd1) (Pelobacter carbinolicus).